The primary structure comprises 365 residues: MNLAAMDPNTYDAQLEEKRIKLENIFTDFDTPNLEVFSSEQAHYRMRAEFRIWHDGEDMYYYMFDKALNSKVRCDQFLPASKLINEMMPALIAELKPNPLLRHRLFQIDFLSTLSGEILVSLLYHKQLDEQWETEAKSLKERLASKFNVNIIGRARKQKLIFDKDFVVESLQVNGEQLQYHQIENSFTQPNGKVSVKMLEWAIDVTKNSSGDLLELYCGNGNFSIALAQNFDRVLATELAKPSVESAQYNIKINKIDNLQIIRMSAEDFTDAMAKKRSFRRLEGIDLDSYNCNTIFVDPPRAGMDPDTVKLVQGYERIVYISCNPNTLIDNLVELSKTHKITRFALFDQFPYTDHMESGVFLERK.

Positions 189, 217, 222, 238, and 298 each coordinate S-adenosyl-L-methionine. C323 functions as the Nucleophile in the catalytic mechanism. The active-site Proton acceptor is the E357.

Belongs to the class I-like SAM-binding methyltransferase superfamily. RNA M5U methyltransferase family. TrmA subfamily.

The enzyme catalyses uridine(54) in tRNA + S-adenosyl-L-methionine = 5-methyluridine(54) in tRNA + S-adenosyl-L-homocysteine + H(+). The catalysed reaction is uridine(341) in tmRNA + S-adenosyl-L-methionine = 5-methyluridine(341) in tmRNA + S-adenosyl-L-homocysteine + H(+). Dual-specificity methyltransferase that catalyzes the formation of 5-methyluridine at position 54 (m5U54) in all tRNAs, and that of position 341 (m5U341) in tmRNA (transfer-mRNA). The chain is tRNA/tmRNA (uracil-C(5))-methyltransferase from Shewanella woodyi (strain ATCC 51908 / MS32).